The chain runs to 279 residues: Putative pyruvate, phosphate dikinase regulatory protein (279 aa).

ADP is bound at residue 157-164; it reads GVSRTSKT.

It belongs to the pyruvate, phosphate/water dikinase regulatory protein family. PDRP subfamily.

It carries out the reaction N(tele)-phospho-L-histidyl/L-threonyl-[pyruvate, phosphate dikinase] + ADP = N(tele)-phospho-L-histidyl/O-phospho-L-threonyl-[pyruvate, phosphate dikinase] + AMP + H(+). It catalyses the reaction N(tele)-phospho-L-histidyl/O-phospho-L-threonyl-[pyruvate, phosphate dikinase] + phosphate + H(+) = N(tele)-phospho-L-histidyl/L-threonyl-[pyruvate, phosphate dikinase] + diphosphate. Functionally, bifunctional serine/threonine kinase and phosphorylase involved in the regulation of the pyruvate, phosphate dikinase (PPDK) by catalyzing its phosphorylation/dephosphorylation. The polypeptide is Putative pyruvate, phosphate dikinase regulatory protein (Lactobacillus helveticus (strain DPC 4571)).